Consider the following 900-residue polypeptide: Protein translocase subunit SecA (900 aa).

Residues Q87, G105–T109, and D512 each bind ATP. Positions E849 to K900 are disordered. The Zn(2+) site is built by C883, C885, C894, and H895. Residues K889–K900 are compositionally biased toward basic residues.

The protein belongs to the SecA family. Monomer and homodimer. Part of the essential Sec protein translocation apparatus which comprises SecA, SecYEG and auxiliary proteins SecDF-YajC and YidC. Zn(2+) serves as cofactor.

The protein resides in the cell inner membrane. The protein localises to the cytoplasm. The enzyme catalyses ATP + H2O + cellular proteinSide 1 = ADP + phosphate + cellular proteinSide 2.. Its function is as follows. Part of the Sec protein translocase complex. Interacts with the SecYEG preprotein conducting channel. Has a central role in coupling the hydrolysis of ATP to the transfer of proteins into and across the cell membrane, serving both as a receptor for the preprotein-SecB complex and as an ATP-driven molecular motor driving the stepwise translocation of polypeptide chains across the membrane. This Pectobacterium atrosepticum (strain SCRI 1043 / ATCC BAA-672) (Erwinia carotovora subsp. atroseptica) protein is Protein translocase subunit SecA.